We begin with the raw amino-acid sequence, 98 residues long: MNVEPSVRVEDKLYYNRYLVDAGHPHVRVRAHKTPSPQLLTLLKACPARCYELNDNGQVEVTVDGCIECGTCRVIAEPTGDIEWSHPRGGYGVLFKFG.

The 4Fe-4S ferredoxin-type domain maps to 57-87; sequence GQVEVTVDGCIECGTCRVIAEPTGDIEWSHP.

This sequence to ferredoxins from P.putida and C.tartarivorum, ferredoxin I from A.vinelandii, ferredoxin II from D.desulfuricans.

Functionally, could be a 3Fe-4S cluster-containing protein. The polypeptide is Ferredoxin-like protein (fixX) (Bradyrhizobium diazoefficiens (strain JCM 10833 / BCRC 13528 / IAM 13628 / NBRC 14792 / USDA 110)).